The sequence spans 271 residues: Insulin-like growth factor-binding protein 5 (271 aa).

The signal sequence occupies residues 1-19 (MVLTAVLLLLAACAGSAQG). The region spanning 22 to 102 (SFVHCEPCDE…LHGRGVCLNE (81 aa)) is the IGFBP N-terminal domain. Disulfide bonds link C26-C52, C29-C54, C37-C55, C44-C58, C66-C79, and C73-C99. The segment covering 109 to 121 (AKIERDSREHEEP) has biased composition (basic and acidic residues). The segment at 109–129 (AKIERDSREHEEPTTSEMAEE) is disordered. At S115 the chain carries Phosphoserine. Residues 188-262 (QGPCRRHMEA…MEYVDGDFQC (75 aa)) enclose the Thyroglobulin type-1 domain. Intrachain disulfides connect C191/C218, C229/C240, and C242/C262.

Interacts with IGF1; this interaction enhances the growth stimulatory effects of IGF1 on fibroblasts. Interacts with CAV1; this interaction allows trafficking of IGFBP5 from the plasma membrane to the nucleus. Interacts with NCL; this interaction is necessary for IGFBP5 localization to the nucleus.

The protein localises to the secreted. It localises to the cytoplasm. The protein resides in the nucleus. Functionally, multifunctional protein that plays a critical role in regulating the availability of IGFs to their receptors and thereby regulates IGF-mediated cellular processes including proliferation, differentiation, and apoptosis in a cell-type specific manner. Increases the cell proliferation of osteoblasts, intestinal smooth muscle cells and neuroblastoma cells. Enhances adhesion and survival of epithelial cells but decreases adhesion of mesenchymal cells. Once secreted, acts as a major mediator of mTORC1-dependent feedback inhibition of IGF1 signaling. Also plays a role in the induction of extracellular matrix (ECM) production and deposition independently of its nuclear translocation and binding to IGFs. Acts itself as a growth factor that can act independently of IGFs to regulate bone formation. Acts as a ligand for the ROR1 receptor which triggers formation of ROR1/HER2 heterodimer to enhance CREB oncogenic signaling. The sequence is that of Insulin-like growth factor-binding protein 5 (IGFBP5) from Bos taurus (Bovine).